A 274-amino-acid polypeptide reads, in one-letter code: Adenosylcobinamide-GDP ribazoletransferase (274 aa).

A run of 7 helical transmembrane segments spans residues Val46–Phe66, Thr69–Phe89, Ile117–Ile137, Trp151–Leu173, His192–Met212, Glu216–Ile236, and Phe253–Val273.

Belongs to the CobS family. The cofactor is Mg(2+).

Its subcellular location is the cell membrane. It carries out the reaction alpha-ribazole + adenosylcob(III)inamide-GDP = adenosylcob(III)alamin + GMP + H(+). It catalyses the reaction alpha-ribazole 5'-phosphate + adenosylcob(III)inamide-GDP = adenosylcob(III)alamin 5'-phosphate + GMP + H(+). It participates in cofactor biosynthesis; adenosylcobalamin biosynthesis; adenosylcobalamin from cob(II)yrinate a,c-diamide: step 7/7. Joins adenosylcobinamide-GDP and alpha-ribazole to generate adenosylcobalamin (Ado-cobalamin). Also synthesizes adenosylcobalamin 5'-phosphate from adenosylcobinamide-GDP and alpha-ribazole 5'-phosphate. This Corynebacterium diphtheriae (strain ATCC 700971 / NCTC 13129 / Biotype gravis) protein is Adenosylcobinamide-GDP ribazoletransferase.